Here is a 418-residue protein sequence, read N- to C-terminus: Serine hydroxymethyltransferase (418 aa).

Residues Leu121 and 125–127 (GHL) each bind (6S)-5,6,7,8-tetrahydrofolate. Lys230 is subject to N6-(pyridoxal phosphate)lysine. 355–357 (SPF) contributes to the (6S)-5,6,7,8-tetrahydrofolate binding site.

Belongs to the SHMT family. As to quaternary structure, homodimer. The cofactor is pyridoxal 5'-phosphate.

The protein resides in the cytoplasm. It catalyses the reaction (6R)-5,10-methylene-5,6,7,8-tetrahydrofolate + glycine + H2O = (6S)-5,6,7,8-tetrahydrofolate + L-serine. The protein operates within one-carbon metabolism; tetrahydrofolate interconversion. It participates in amino-acid biosynthesis; glycine biosynthesis; glycine from L-serine: step 1/1. Catalyzes the reversible interconversion of serine and glycine with tetrahydrofolate (THF) serving as the one-carbon carrier. This reaction serves as the major source of one-carbon groups required for the biosynthesis of purines, thymidylate, methionine, and other important biomolecules. Also exhibits THF-independent aldolase activity toward beta-hydroxyamino acids, producing glycine and aldehydes, via a retro-aldol mechanism. In Streptococcus pyogenes serotype M5 (strain Manfredo), this protein is Serine hydroxymethyltransferase.